The chain runs to 438 residues: Glyceraldehyde-3-phosphate dehydrogenase B, chloroplastic (438 aa).

The transit peptide at 1-53 directs the protein to the chloroplast; it reads CLSKKFEVAEFAGLRSSGCVTFSNKESSFFDVVSAQLTPKTTRSTPVKGETVA. NADP(+) contacts are provided by residues 64–65, aspartate 88, and arginine 133; that span reads RI. D-glyceraldehyde 3-phosphate is bound by residues 207–209, threonine 238, arginine 253, 266–267, and arginine 289; these read SCT and TG. The active-site Nucleophile is cysteine 208. Asparagine 372 provides a ligand contact to NADP(+).

This sequence belongs to the glyceraldehyde-3-phosphate dehydrogenase family. In terms of assembly, tetramer of either four A chains (GAPDH 2) or two A and two B chains (GAPDH 1).

Its subcellular location is the plastid. It localises to the chloroplast. It catalyses the reaction D-glyceraldehyde 3-phosphate + phosphate + NADP(+) = (2R)-3-phospho-glyceroyl phosphate + NADPH + H(+). It functions in the pathway carbohydrate biosynthesis; Calvin cycle. In Nicotiana tabacum (Common tobacco), this protein is Glyceraldehyde-3-phosphate dehydrogenase B, chloroplastic (GAPB).